Here is a 238-residue protein sequence, read N- to C-terminus: Hydatid disease diagnostic antigen P-29 (238 aa).

In terms of domain architecture, BAR spans 18–238; the sequence is GELVNKNEKT…AKECSMMLGE (221 aa).

The polypeptide is Hydatid disease diagnostic antigen P-29 (Echinococcus granulosus (Hydatid tapeworm)).